Reading from the N-terminus, the 133-residue chain is Small ribosomal subunit protein uS19 (133 aa).

Belongs to the universal ribosomal protein uS19 family.

Its function is as follows. Protein S19 forms a complex with S13 that binds strongly to the 16S ribosomal RNA. The sequence is that of Small ribosomal subunit protein uS19 from Thermococcus sibiricus (strain DSM 12597 / MM 739).